Here is a 443-residue protein sequence, read N- to C-terminus: POU domain, class 3, transcription factor 3-B (443 aa).

3 disordered regions span residues 21-40 (IVHSDSGGGMQQGSAAVTSV), 100-150 (SPWS…AGAW), and 182-244 (NGML…PTSD). The segment covering 101–121 (PWSSSPVGMTGSPQQQDVKNN) has biased composition (polar residues). Positions 210 to 225 (SHHHHHHHQHQHHQQA) are enriched in basic residues. One can recognise a POU-specific domain in the interval 238 to 312 (EDTPTSDDLE…LLNKWLEEAD (75 aa)). S317 is modified (phosphoserine). Positions 330–389 (KRKKRTSIEVSVKGALESHFLKCPKPSAQEITSLADNLQLEKEVVRVWFCNRRQKEKRMT) form a DNA-binding region, homeobox.

The protein belongs to the POU transcription factor family. Class-3 subfamily. As to expression, predominantly expressed in the central nervous system.

Its subcellular location is the nucleus. In terms of biological role, transcription factor that may play important roles in patterning the embryonic brain. This is POU domain, class 3, transcription factor 3-B (pou3f3b) from Danio rerio (Zebrafish).